We begin with the raw amino-acid sequence, 152 residues long: MQMNHPIYIASDHTGLELKSLVIKHLEQQKLQVIDLGPTELDPLDDYPDYAFLLAQTMQANPNSLGILICGTGVGVCMAANKAKGILAALVVDSKTAALARQHDDANVLCLSSRFVVPEENIKIVDEFLQAQFEGGRHSKRVGKIIAYEREK.

Residue 12 to 13 (DH) participates in D-ribulose 5-phosphate binding. The Proton acceptor role is filled by Cys70. Residue 71–75 (GTGVG) participates in D-ribulose 5-phosphate binding. His103 acts as the Proton donor in catalysis. Residues Asp104, Arg114, Arg137, and Arg141 each coordinate D-ribulose 5-phosphate.

Belongs to the LacAB/RpiB family. As to quaternary structure, homodimer.

It carries out the reaction aldehydo-D-ribose 5-phosphate = D-ribulose 5-phosphate. It participates in carbohydrate degradation; pentose phosphate pathway; D-ribose 5-phosphate from D-ribulose 5-phosphate (non-oxidative stage): step 1/1. Catalyzes the interconversion of ribulose-5-P and ribose-5-P. This chain is Probable ribose-5-phosphate isomerase B, found in Mycoplasma pneumoniae (strain ATCC 29342 / M129 / Subtype 1) (Mycoplasmoides pneumoniae).